A 222-amino-acid polypeptide reads, in one-letter code: Latexin (222 aa).

The Cystatin LXN-type 1 domain maps to 1–97 (MEIPPTHYAA…NFTFEGEIGK (97 aa)). At lysine 55 the chain carries N6-acetyllysine. Residues 98–117 (NPDEEDNTFYQSLMSLKRPL) are alpha-helical linker. The Cystatin LXN-type 2 domain occupies 118–222 (EAQDIPDNFG…SRLPKEGQAE (105 aa)).

Belongs to the protease inhibitor I47 (latexin) family. As to expression, highly enriched in macrophages.

It localises to the cytoplasm. Its function is as follows. Hardly reversible, non-competitive, and potent inhibitor of CPA1, CPA2 and CPA4. May play a role in inflammation. This Mus musculus (Mouse) protein is Latexin (Lxn).